Reading from the N-terminus, the 150-residue chain is Catabolic 3-dehydroquinase 2 (150 aa).

Tyrosine 23 serves as the catalytic Proton acceptor. Substrate is bound by residues asparagine 74, histidine 80, and aspartate 87. Histidine 100 (proton donor) is an active-site residue. Substrate contacts are provided by residues 101–102 and arginine 111; that span reads IT.

The protein belongs to the type-II 3-dehydroquinase family. As to quaternary structure, homododecamer. Adopts a ring-like structure, composed of an arrangement of two hexameric rings stacked on top of one another.

The enzyme catalyses 3-dehydroquinate = 3-dehydroshikimate + H2O. Its pathway is aromatic compound metabolism; 3,4-dihydroxybenzoate biosynthesis; 3,4-dihydroxybenzoate from 3-dehydroquinate: step 1/2. Is involved in the catabolism of quinate. Allows the utilization of quinate as carbon source via the beta-ketoadipate pathway. The chain is Catabolic 3-dehydroquinase 2 from Neosartorya fischeri (strain ATCC 1020 / DSM 3700 / CBS 544.65 / FGSC A1164 / JCM 1740 / NRRL 181 / WB 181) (Aspergillus fischerianus).